The following is a 93-amino-acid chain: Large ribosomal subunit protein bL27 (93 aa).

A propeptide spanning residues 1-9 is cleaved from the precursor; that stretch reads MIKINLQLF.

It belongs to the bacterial ribosomal protein bL27 family. The N-terminus is cleaved by ribosomal processing cysteine protease Prp.

The chain is Large ribosomal subunit protein bL27 from Ruminiclostridium cellulolyticum (strain ATCC 35319 / DSM 5812 / JCM 6584 / H10) (Clostridium cellulolyticum).